We begin with the raw amino-acid sequence, 94 residues long: Small ribosomal subunit protein bS18 (94 aa).

The protein belongs to the bacterial ribosomal protein bS18 family. Part of the 30S ribosomal subunit. Forms a tight heterodimer with protein bS6.

Functionally, binds as a heterodimer with protein bS6 to the central domain of the 16S rRNA, where it helps stabilize the platform of the 30S subunit. This chain is Small ribosomal subunit protein bS18, found in Rickettsia bellii (strain OSU 85-389).